The sequence spans 340 residues: Glyceraldehyde-3-phosphate dehydrogenase (340 aa).

NAD(+) is bound by residues 11 to 12 and Gly-109; that span reads TI. Residue 138–140 participates in D-glyceraldehyde 3-phosphate binding; it reads SCN. The Nucleophile role is filled by Cys-139. NAD(+) is bound at residue Arg-167. 193–194 is a D-glyceraldehyde 3-phosphate binding site; the sequence is HA. Gln-300 lines the NAD(+) pocket.

The protein belongs to the glyceraldehyde-3-phosphate dehydrogenase family. Homotetramer.

Its subcellular location is the cytoplasm. The catalysed reaction is D-glyceraldehyde 3-phosphate + phosphate + NADP(+) = (2R)-3-phospho-glyceroyl phosphate + NADPH + H(+). It carries out the reaction D-glyceraldehyde 3-phosphate + phosphate + NAD(+) = (2R)-3-phospho-glyceroyl phosphate + NADH + H(+). Its pathway is carbohydrate degradation; glycolysis; pyruvate from D-glyceraldehyde 3-phosphate: step 1/5. This Saccharolobus islandicus (strain M.14.25 / Kamchatka #1) (Sulfolobus islandicus) protein is Glyceraldehyde-3-phosphate dehydrogenase.